Here is a 368-residue protein sequence, read N- to C-terminus: Flagellar P-ring protein (368 aa).

A signal peptide spans 1-24 (MTLTRPLALISALAALILALPADA).

The protein belongs to the FlgI family. In terms of assembly, the basal body constitutes a major portion of the flagellar organelle and consists of four rings (L,P,S, and M) mounted on a central rod.

The protein localises to the periplasm. It is found in the bacterial flagellum basal body. In terms of biological role, assembles around the rod to form the L-ring and probably protects the motor/basal body from shearing forces during rotation. This Methylobacillus flagellatus (strain ATCC 51484 / DSM 6875 / VKM B-1610 / KT) protein is Flagellar P-ring protein.